The following is a 323-amino-acid chain: Ficolin-2 (323 aa).

The signal sequence occupies residues 1-26 (MDTRGVAAAMRPLVLLVAFLCTAAPA). The Collagen-like domain occupies 52 to 102 (GLPGAAGPKGEAGASGPKGGQGPPGAPGEPGPPGPKGDRGEKGEPGPKGES). The segment covering 55–66 (GAAGPKGEAGAS) has biased composition (low complexity). The disordered stretch occupies residues 55-107 (GAAGPKGEAGASGPKGGQGPPGAPGEPGPPGPKGDRGEKGEPGPKGESWETEQ). Residues 75-86 (PGAPGEPGPPGP) are compositionally biased toward pro residues. Basic and acidic residues predominate over residues 87–102 (KGDRGEKGEPGPKGES). The 218-residue stretch at 106–323 (EQCLTGPRTC…KVSEMKFRAT (218 aa)) folds into the Fibrinogen C-terminal domain. 2 disulfide bridges follow: C108/C136 and C115/C143. Residue N249 is glycosylated (N-linked (GlcNAc...) asparagine). Residues D259, D261, and S265 each contribute to the Ca(2+) site. Residues C267 and C280 are joined by a disulfide bond. N-linked (GlcNAc...) asparagine glycosylation is found at N302 and N310.

This sequence belongs to the ficolin lectin family. As to quaternary structure, homotrimer. Interacts with elastin. Interacts with MASP1 and MASP2. As to expression, mainly expressed in skeletal muscle.

The protein localises to the secreted. Its function is as follows. May function in innate immunity through activation of the lectin complement pathway. Calcium-dependent and GlcNAc-binding lectin. This chain is Ficolin-2 (FCN2), found in Sus scrofa (Pig).